A 493-amino-acid polypeptide reads, in one-letter code: ATP synthase subunit beta, chloroplastic (493 aa).

170-177 serves as a coordination point for ATP; the sequence is GGAGVGKT.

Belongs to the ATPase alpha/beta chains family. F-type ATPases have 2 components, CF(1) - the catalytic core - and CF(0) - the membrane proton channel. CF(1) has five subunits: alpha(3), beta(3), gamma(1), delta(1), epsilon(1). CF(0) has four main subunits: a(1), b(1), b'(1) and c(9-12).

The protein localises to the plastid. The protein resides in the chloroplast thylakoid membrane. It carries out the reaction ATP + H2O + 4 H(+)(in) = ADP + phosphate + 5 H(+)(out). Its function is as follows. Produces ATP from ADP in the presence of a proton gradient across the membrane. The catalytic sites are hosted primarily by the beta subunits. The sequence is that of ATP synthase subunit beta, chloroplastic from Adiantum capillus-veneris (Maidenhair fern).